A 384-amino-acid chain; its full sequence is Anhydro-N-acetylmuramic acid kinase (384 aa).

17-24 (GTSMDGVD) contacts ATP.

The protein belongs to the anhydro-N-acetylmuramic acid kinase family.

It carries out the reaction 1,6-anhydro-N-acetyl-beta-muramate + ATP + H2O = N-acetyl-D-muramate 6-phosphate + ADP + H(+). The protein operates within amino-sugar metabolism; 1,6-anhydro-N-acetylmuramate degradation. Its pathway is cell wall biogenesis; peptidoglycan recycling. Its function is as follows. Catalyzes the specific phosphorylation of 1,6-anhydro-N-acetylmuramic acid (anhMurNAc) with the simultaneous cleavage of the 1,6-anhydro ring, generating MurNAc-6-P. Is required for the utilization of anhMurNAc either imported from the medium or derived from its own cell wall murein, and thus plays a role in cell wall recycling. The protein is Anhydro-N-acetylmuramic acid kinase of Burkholderia thailandensis (strain ATCC 700388 / DSM 13276 / CCUG 48851 / CIP 106301 / E264).